The sequence spans 276 residues: 2,3,4,5-tetrahydropyridine-2,6-dicarboxylate N-succinyltransferase (276 aa).

Substrate is bound by residues arginine 107 and aspartate 144.

The protein belongs to the transferase hexapeptide repeat family. In terms of assembly, homotrimer.

Its subcellular location is the cytoplasm. The enzyme catalyses (S)-2,3,4,5-tetrahydrodipicolinate + succinyl-CoA + H2O = (S)-2-succinylamino-6-oxoheptanedioate + CoA. It functions in the pathway amino-acid biosynthesis; L-lysine biosynthesis via DAP pathway; LL-2,6-diaminopimelate from (S)-tetrahydrodipicolinate (succinylase route): step 1/3. The protein is 2,3,4,5-tetrahydropyridine-2,6-dicarboxylate N-succinyltransferase of Gluconobacter oxydans (strain 621H) (Gluconobacter suboxydans).